A 390-amino-acid polypeptide reads, in one-letter code: MSWWWAGAIGAARKKFEEDDAPRDCQSVALIIGVTGIVGNSLAEILPISDTPGGPWKVYGVARRPRPAWNADHPVEYIQCDISDASDTHTKLSPLTDVTHIFWVTWANRPTESECCELNGTMLRNVLNALIPKAANLHHICLQTGHKHYIGPFEAFGKIKPHEPPFTEDMPRLNAPNFYYTLEDMLVEASEKKAGLNWSVHRPAVIFGFSPFSMMNIIGTLCVYAAICKHENTPLKFPGTKAAWNCYSVASDADLIAEHQIWAAVDPYAKNEAFNCSNGDLFKWKHLWKVLAEQFGVEYAEFDESEKPTSLVERMKDKGPVWEEIVRENGLHTTKLEGVATWWFADVILGGECLLDSMNKSKEHGYLGFRNTKNSLISVIDKMKAHKIVP.

NADP(+) contacts are provided by residues 35–37 (TGI), 63–64 (RR), 81–82 (DI), 105–106 (TW), and glutamine 143. Catalysis depends on residues lysine 147 and tyrosine 179. Substrate contacts are provided by lysine 147 and tyrosine 179. NADP(+) is bound by residues tyrosine 179 and 213–215 (SMM).

Belongs to the short-chain dehydrogenases/reductases (SDR) family. Highly divergent.

The catalysed reaction is (S)-8-oxocitronellyl enol + NADP(+) = (6E)-8-oxogeranial + NADPH + H(+). It catalyses the reaction (S)-8-oxocitronellyl enol + NAD(+) = (6E)-8-oxogeranial + NADH + H(+). Functionally, iridoid synthase that catalyzes the first step in generation of the iridoid ring scaffold using the linear monoterpene (6E)-8-oxogeranial as substrate. Iridoids comprise a large family of distinctive bicyclic monoterpenes that possess a wide range of pharmacological activities, including anticancer, anti-inflammatory, antifungal and antibacterial activities. This Camptotheca acuminata (Happy tree) protein is (S)-8-oxocitronellyl enol synthase CYC2.